The primary structure comprises 238 residues: MGQKVNPIGMRLQVNRTWDSRWFAESKDYGNLLLEDLKMREFIHDYAKQAGVSKVIIERPHRKCRVTIHTARPGVIIGKKGADIETLRKKLSAFTKSELHLNIVEIRKPELDAQLVAESIAQQMERRVSFRRAMKRGVQNAMRIGALGIRVNVSGRLGGAEIARTEWYREGRVPLHTLRADIDYATSEATTPYGIIGVKVWIFKGEILEHDPQAHDRRHSEAQEGAAPRPPRRDRERA.

A KH type-2 domain is found at 39–107 (MREFIHDYAK…ELHLNIVEIR (69 aa)). Positions 212 to 222 (PQAHDRRHSEA) are enriched in basic and acidic residues. Residues 212 to 238 (PQAHDRRHSEAQEGAAPRPPRRDRERA) are disordered.

The protein belongs to the universal ribosomal protein uS3 family. As to quaternary structure, part of the 30S ribosomal subunit. Forms a tight complex with proteins S10 and S14.

Binds the lower part of the 30S subunit head. Binds mRNA in the 70S ribosome, positioning it for translation. The chain is Small ribosomal subunit protein uS3 from Cereibacter sphaeroides (strain ATCC 17029 / ATH 2.4.9) (Rhodobacter sphaeroides).